The sequence spans 400 residues: Methylamine dehydrogenase heavy chain (400 aa).

The first 27 residues, 1-27 (MTTFQPGRLAGQLAATALLAATCSAFA), serve as a signal peptide directing secretion.

Belongs to the aromatic amine dehydrogenase heavy chain family. In terms of assembly, tetramer of two light and two heavy chains.

It is found in the periplasm. It catalyses the reaction 2 oxidized [amicyanin] + methylamine + H2O = 2 reduced [amicyanin] + formaldehyde + NH4(+) + 2 H(+). In terms of biological role, methylamine dehydrogenase carries out the oxidation of methylamine. Electrons are passed from methylamine dehydrogenase to amicyanin. The polypeptide is Methylamine dehydrogenase heavy chain (mauB) (Methylobacillus flagellatus (strain ATCC 51484 / DSM 6875 / VKM B-1610 / KT)).